The sequence spans 149 residues: Down syndrome critical region protein 9 (149 aa).

The interval 1 to 41 (MGRICPVNSRARRLRARPGRPSGDSLPYHQLQGGAPRLWSP) is disordered.

In Pan troglodytes (Chimpanzee), this protein is Down syndrome critical region protein 9 (DSCR9).